The primary structure comprises 247 residues: Ubiquinone biosynthesis O-methyltransferase (247 aa).

The S-adenosyl-L-methionine site is built by R39, G70, D91, and M134.

Belongs to the methyltransferase superfamily. UbiG/COQ3 family.

It carries out the reaction a 3-demethylubiquinol + S-adenosyl-L-methionine = a ubiquinol + S-adenosyl-L-homocysteine + H(+). The enzyme catalyses a 3-(all-trans-polyprenyl)benzene-1,2-diol + S-adenosyl-L-methionine = a 2-methoxy-6-(all-trans-polyprenyl)phenol + S-adenosyl-L-homocysteine + H(+). It participates in cofactor biosynthesis; ubiquinone biosynthesis. Functionally, O-methyltransferase that catalyzes the 2 O-methylation steps in the ubiquinone biosynthetic pathway. The polypeptide is Ubiquinone biosynthesis O-methyltransferase (Cereibacter sphaeroides (strain ATCC 17029 / ATH 2.4.9) (Rhodobacter sphaeroides)).